The following is a 1132-amino-acid chain: Phospholipid-transporting ATPase IG (1132 aa).

Over 1–66 (MQMVPSLPPA…NFLPKNLFEQ (66 aa)) the chain is Cytoplasmic. The helical transmembrane segment at 67 to 85 (FRRIANFYFLIIFLVQVTV) threads the bilayer. Residue aspartate 86 is a topological domain, extracellular. Residues 87 to 107 (TPTSPVTSGLPLFFVITVTAI) form a helical membrane-spanning segment. Residues 108–290 (KQGYEDCLRH…SQKRSAVEKS (183 aa)) lie on the Cytoplasmic side of the membrane. Residues 291–311 (INAFLIVYLFILLTKAAVCTT) traverse the membrane as a helical segment. Residues 312-346 (LKYVWQSTPYNDEPWYNQKTQKERETLKVLKMFTD) lie on the Extracellular side of the membrane. A helical membrane pass occupies residues 347 to 367 (FLSFMVLFNFIIPVSMYVTVE). The Cytoplasmic segment spans residues 368 to 879 (MQKFLGSFFI…YVRIAHLVQY (512 aa)). Catalysis depends on aspartate 412, which acts as the 4-aspartylphosphate intermediate. Residues aspartate 412, lysine 413, and threonine 414 each coordinate ATP. A Mg(2+)-binding site is contributed by aspartate 412. Threonine 414 contributes to the Mg(2+) binding site. The residue at position 445 (serine 445) is a Phosphoserine. ATP is bound by residues glutamate 501, phenylalanine 543, lysine 566, arginine 597, threonine 677, glycine 678, aspartate 679, arginine 792, and lysine 798. Aspartate 819 is a Mg(2+) binding site. ATP is bound by residues asparagine 822 and aspartate 823. Aspartate 823 is a binding site for Mg(2+). A helical transmembrane segment spans residues 880-900 (FFYKNLCFILPQFLYQFFCGF). The Extracellular portion of the chain corresponds to 901–908 (SQQPLYDA). A helical transmembrane segment spans residues 909 to 929 (AYLTMYNICFTSLPILAYSLL). At 930-955 (EQHINIDTLTSDPRLYMKISGNAMLQ) the chain is on the cytoplasmic side. Residues 956–976 (LGPFLYWTFLAAFEGTVFFFG) form a helical membrane-spanning segment. Over 977–995 (TYFLFQTASLEENGKVYGN) the chain is Extracellular. A helical transmembrane segment spans residues 996–1016 (WTFGTIVFTVLVFTVTLKLAL). Residues 1017 to 1026 (DTRFWTWINH) lie on the Cytoplasmic side of the membrane. The helical transmembrane segment at 1027–1047 (FVIWGSLAFYVFFSFFWGGII) threads the bilayer. Over 1048–1069 (WPFLKQQRMYFVFAQMLSSVST) the chain is Extracellular. Residues 1070 to 1090 (WLAIILLIFISLFPEILLIVL) form a helical membrane-spanning segment. The Cytoplasmic segment spans residues 1091-1132 (KNVRRRSARRNLSCRRASDSLSARPSVRPLLLRTFSDESNVL). A phosphoserine mark is found at serine 1108, serine 1116, and serine 1126. The short motif at 1116-1121 (SVRPLL) is the Di-leucine motif element.

Belongs to the cation transport ATPase (P-type) (TC 3.A.3) family. Type IV subfamily. In terms of assembly, component of a P4-ATPase flippase complex which consists of a catalytic alpha subunit ATP11C and an accessory beta subunit TMEM30A. Requires Mg(2+) as cofactor. Proteolytically cleaved by CASP3, CASP6 and CASP7. Post-translationally, phosphorylated at Ser-1116 likely by PRKCA; this creates a functional di-leucine motif that is sufficient for endocytosis. In terms of tissue distribution, widely expressed.

It is found in the cell membrane. It localises to the endoplasmic reticulum membrane. The protein localises to the early endosome membrane. Its subcellular location is the recycling endosome membrane. The enzyme catalyses ATP + H2O + phospholipidSide 1 = ADP + phosphate + phospholipidSide 2.. The catalysed reaction is a 1,2-diacyl-sn-glycero-3-phospho-L-serine(out) + ATP + H2O = a 1,2-diacyl-sn-glycero-3-phospho-L-serine(in) + ADP + phosphate + H(+). It catalyses the reaction a 1,2-diacyl-sn-glycero-3-phosphoethanolamine(out) + ATP + H2O = a 1,2-diacyl-sn-glycero-3-phosphoethanolamine(in) + ADP + phosphate + H(+). The flippase activity is inactivated by caspase-mediated cleavage in apoptotic cells, allowing for PS exposure on the cell surface and engulfment of apoptotic cells by macrophages. The ATPase activity is up-regulated by aminophospholipids PS and PE and down-regulated by Increasing intracellular Ca2+ levels. Its function is as follows. Catalytic component of a P4-ATPase flippase complex which catalyzes the hydrolysis of ATP coupled to the transport of aminophospholipids, phosphatidylserines (PS) and phosphatidylethanolamines (PE), from the outer to the inner leaflet of the plasma membrane. Major PS-flippase in immune cell subsets. In erythrocyte plasma membrane, it is required to maintain PS in the inner leaflet preventing its exposure on the surface. This asymmetric distribution is critical for the survival of erythrocytes in circulation since externalized PS is a phagocytic signal for erythrocyte clearance by splenic macrophages. Required for B cell differentiation past the pro-B cell stage. Seems to mediate PS flipping in pro-B cells. May be involved in the transport of cholestatic bile acids. This chain is Phospholipid-transporting ATPase IG, found in Homo sapiens (Human).